Here is a 106-residue protein sequence, read N- to C-terminus: Urease subunit beta (106 aa).

This sequence belongs to the urease beta subunit family. Heterotrimer of UreA (gamma), UreB (beta) and UreC (alpha) subunits. Three heterotrimers associate to form the active enzyme.

It localises to the cytoplasm. It carries out the reaction urea + 2 H2O + H(+) = hydrogencarbonate + 2 NH4(+). The protein operates within nitrogen metabolism; urea degradation; CO(2) and NH(3) from urea (urease route): step 1/1. The sequence is that of Urease subunit beta from Synechococcus sp. (strain CC9902).